The chain runs to 312 residues: MNVTFLGTSSGVPTLTRNVSSLALKLSQTAEVWLFDCGEGTQHQLMKSNIKSSQIKKIFITHMHGDHIYGLPGLLATLGLSGNSNGIELYGPSELKFFVLSALKSSYCKLSFPLRFKEVEDKASFNKILFENDKLKVHCACLKHRLPAYGYRVSEKDKPGIFDIKKATDLNIPPGPIYSELQAGKTVKLKDGRSFNGQEFCGPPRKGESFVYCTDTVFSESAINLSKNADLLVHESTFSKEDEKMAYEKLHSTTIMAAKTALLANAKKLIITHISPRYTQKSLIKPSTLLLEAQKIFPNTYLAKDFLTAKIK.

Histidine 62, histidine 64, aspartate 66, histidine 67, histidine 144, aspartate 215, and histidine 273 together coordinate Zn(2+). Aspartate 66 serves as the catalytic Proton acceptor.

Belongs to the RNase Z family. Homodimer. It depends on Zn(2+) as a cofactor.

It carries out the reaction Endonucleolytic cleavage of RNA, removing extra 3' nucleotides from tRNA precursor, generating 3' termini of tRNAs. A 3'-hydroxy group is left at the tRNA terminus and a 5'-phosphoryl group is left at the trailer molecule.. Its function is as follows. Zinc phosphodiesterase, which displays some tRNA 3'-processing endonuclease activity. Probably involved in tRNA maturation, by removing a 3'-trailer from precursor tRNA. In Prochlorococcus marinus (strain MIT 9515), this protein is Ribonuclease Z.